The primary structure comprises 352 residues: C-C chemokine receptor type 5 (352 aa).

Residues 1–30 (MDYQVSSPTYDIDYYTSEPCQKVNVKQIAA) lie on the Extracellular side of the membrane. Y3 bears the Sulfotyrosine mark. O-linked (GalNAc...) serine glycosylation is found at S6 and S7. Residues Y10, Y14, and Y15 each carry the sulfotyrosine modification. Intrachain disulfides connect C20/C269 and C101/C178. Residues 31–58 (RLLPPLYSLVFIFGFVGNILVVLILINC) traverse the membrane as a helical segment. Over 59 to 68 (KRLKSMTDIY) the chain is Cytoplasmic. A helical transmembrane segment spans residues 69–89 (LLNLAISDLFFLLTVPFWAHY). Residues 90-102 (AAAQWDFGNTMCQ) lie on the Extracellular side of the membrane. A helical membrane pass occupies residues 103–124 (LLTGLYFIGFFSGIFFIILLTI). Residues 125-141 (DRYLAIVHAVFALKART) are Cytoplasmic-facing. A helical membrane pass occupies residues 142-166 (VTFGVVTSVITWVVAVFASLPGIIF). Topologically, residues 167–198 (TRSQREGLHYTCSSHFPYSQYQFWKNFQTLKI) are extracellular. The chain crosses the membrane as a helical span at residues 199-218 (VILGLVLPLLIMVICYSGIL). The Cytoplasmic segment spans residues 219-235 (KTLLRCRNEKKRHRAVR). A helical transmembrane segment spans residues 236-260 (LIFTIMIVYFLFWAPYNIVLLLNTF). Residues 261 to 277 (QEFFGLNNCSSSNRLDQ) lie on the Extracellular side of the membrane. The helical transmembrane segment at 278–301 (AMQVTETLGMTHCCINPIIYAFVG) threads the bilayer. Topologically, residues 302–352 (EKFRNYLLVFFQKHIAKRFCKCCSIFQQEAPERASSVYTRSTGEHEISVGL) are cytoplasmic. 3 S-palmitoyl cysteine lipidation sites follow: C321, C323, and C324. 4 positions are modified to phosphoserine; by BARK1: S336, S337, S342, and S349.

It belongs to the G-protein coupled receptor 1 family. In terms of assembly, interacts with PRAF2. Efficient ligand binding to CCL3/MIP-1alpha and CCL4/MIP-1beta requires sulfation, O-glycosylation and sialic acid modifications. Glycosylation on Ser-6 is required for efficient binding of CCL4. Interacts with GRK2. Interacts with ARRB1 and ARRB2. Interacts with CNIH4. Interacts with S100A4; this interaction stimulates T-lymphocyte chemotaxis. In terms of processing, sulfated on at least 2 of the N-terminal tyrosines. Sulfation is required for efficient binding of the chemokines, CCL3 and CCL4. Post-translationally, palmitoylation in the C-terminal is important for cell surface expression. Phosphorylation on serine residues in the C-terminal is stimulated by binding CC chemokines especially by APO-RANTES. In terms of processing, O-glycosylated, but not N-glycosylated. Ser-6 appears to be the major site even if Ser-7 may be also O-glycosylated. Also sialylated glycans present which contribute to chemokine binding. Thr-16 and Ser-17 may also be glycosylated and, if so, with small moieties such as a T-antigen.

It is found in the cell membrane. Its function is as follows. Receptor for a number of inflammatory CC-chemokines including CCL3/MIP-1-alpha, CCL4/MIP-1-beta and RANTES and subsequently transduces a signal by increasing the intracellular calcium ion level. May play a role in the control of granulocytic lineage proliferation or differentiation. Participates in T-lymphocyte migration to the infection site by acting as a chemotactic receptor. The protein is C-C chemokine receptor type 5 (CCR5) of Pygathrix nemaeus (Red-shanked douc langur).